The primary structure comprises 344 residues: NADH-ubiquinone oxidoreductase chain 2 (344 aa).

Transmembrane regions (helical) follow at residues 1–21 (MNPLALTIFLLSLAIGTTITL), 24–44 (FHWLLAWIGLEINTLAIIPLM), 59–79 (YFLTQAAASALVLFSSLISAW), 94–114 (MNILSIALMMKLGLAPLHFWI), 121–141 (ISLPTGLILSTWQKIAPMALL), 150–170 (LNLTIALGLTSIMVGGWGGIG), 177–197 (IMAFSSIGHLGWIIVILKFDP), 201–221 (LLNFVLYIIMTAAMFMSLTTI), 245–265 (LILLSLAGLPPLTGFTPKLLI), 273–293 (NATLLAVMVMFISLLALFFYI), and 324–344 (TAIMNTMALILLPITPTLLLL).

This sequence belongs to the complex I subunit 2 family.

The protein localises to the mitochondrion inner membrane. The catalysed reaction is a ubiquinone + NADH + 5 H(+)(in) = a ubiquinol + NAD(+) + 4 H(+)(out). Functionally, core subunit of the mitochondrial membrane respiratory chain NADH dehydrogenase (Complex I) that is believed to belong to the minimal assembly required for catalysis. Complex I functions in the transfer of electrons from NADH to the respiratory chain. The immediate electron acceptor for the enzyme is believed to be ubiquinone. In Aquarana catesbeiana (American bullfrog), this protein is NADH-ubiquinone oxidoreductase chain 2 (MT-ND2).